The chain runs to 257 residues: Ribonuclease HII (257 aa).

The RNase H type-2 domain occupies 71 to 257 (SLIAGIDEVG…TSFEPIKSML (187 aa)). Positions 77, 78, and 172 each coordinate a divalent metal cation.

This sequence belongs to the RNase HII family. The cofactor is Mn(2+). It depends on Mg(2+) as a cofactor.

It is found in the cytoplasm. The catalysed reaction is Endonucleolytic cleavage to 5'-phosphomonoester.. In terms of biological role, endonuclease that specifically degrades the RNA of RNA-DNA hybrids. This Streptococcus uberis (strain ATCC BAA-854 / 0140J) protein is Ribonuclease HII.